Here is a 223-residue protein sequence, read N- to C-terminus: UPF0758 protein Tgr7_0100 (223 aa).

An MPN domain is found at 102 to 223 (ALTSPDDTRR…LVSFAERGLL (122 aa)). 3 residues coordinate Zn(2+): H173, H175, and D186. Positions 173–186 (HNHPSGVAEPSRSD) match the JAMM motif motif.

It belongs to the UPF0758 family.

This Thioalkalivibrio sulfidiphilus (strain HL-EbGR7) protein is UPF0758 protein Tgr7_0100.